A 146-amino-acid chain; its full sequence is Large ribosomal subunit protein uL15 (146 aa).

Positions 1–54 (MKLHELQPAAGSRKAPKRVGRGTGSGLGRNAGKGEKGQNARSGGGVRPGFEGGQ) are disordered. Composition is skewed to gly residues over residues 21–31 (RGTGSGLGRNA) and 42–52 (SGGGVRPGFEG).

It belongs to the universal ribosomal protein uL15 family. In terms of assembly, part of the 50S ribosomal subunit.

In terms of biological role, binds to the 23S rRNA. This Clostridium botulinum (strain Alaska E43 / Type E3) protein is Large ribosomal subunit protein uL15.